The chain runs to 456 residues: Glycerol-3-phosphate acyltransferase 4 (456 aa).

Positions 1-37 are cleaved as a signal peptide; that stretch reads MFLLLPFDSLIVSLLGISLTVLFTLLLVFIIVPAVFG. The next 2 membrane-spanning stretches (helical) occupy residues 156–176 and 180–200; these read ISLR…CLLL and IALA…VGYL. N-linked (GlcNAc...) asparagine glycosylation is present at N247. The HXXXXD motif motif lies at 248 to 253; that stretch reads HTSPID. 3 N-linked (GlcNAc...) asparagine glycosylation sites follow: N327, N328, and N362.

It belongs to the 1-acyl-sn-glycerol-3-phosphate acyltransferase family.

It localises to the endoplasmic reticulum membrane. It catalyses the reaction sn-glycerol 3-phosphate + an acyl-CoA = a 1-acyl-sn-glycero-3-phosphate + CoA. It carries out the reaction dodecanoyl-CoA + sn-glycerol 3-phosphate = 1-dodecanoyl-sn-glycerol 3-phosphate + CoA. The enzyme catalyses sn-glycerol 3-phosphate + hexadecanoyl-CoA = 1-hexadecanoyl-sn-glycero-3-phosphate + CoA. The catalysed reaction is sn-glycerol 3-phosphate + octadecanoyl-CoA = 1-octadecanoyl-sn-glycero-3-phosphate + CoA. It catalyses the reaction sn-glycerol 3-phosphate + (9Z)-octadecenoyl-CoA = 1-(9Z-octadecenoyl)-sn-glycero-3-phosphate + CoA. It carries out the reaction (9Z,12Z)-octadecadienoyl-CoA + sn-glycerol 3-phosphate = 1-(9Z,12Z)-octadecadienoyl-sn-glycero-3-phosphate + CoA. It participates in phospholipid metabolism; CDP-diacylglycerol biosynthesis; CDP-diacylglycerol from sn-glycerol 3-phosphate: step 1/3. Converts glycerol-3-phosphate to 1-acyl-sn-glycerol-3-phosphate (lysophosphatidic acid or LPA) by incorporating an acyl moiety at the sn-1 position of the glycerol backbone. Active against both saturated and unsaturated long-chain fatty acyl-CoAs. Protects cells against lipotoxicity. The chain is Glycerol-3-phosphate acyltransferase 4 from Bos taurus (Bovine).